The primary structure comprises 251 residues: FHA domain-containing protein FHA1 (251 aa).

The 58-residue stretch at 32-89 folds into the FHA domain; that stretch reads IILGRNSKKSTVDVDLSSLGGGMNISRNHARIFYDFTRRRFSLEVLGKNGCFVEGVLH. Residues 163-174 show a composition bias toward acidic residues; sequence EYDDEDDDEEED. The tract at residues 163 to 209 is disordered; the sequence is EYDDEDDDEEEDIRGSGKKTWRDGHEGVYASGEKKREGRSKADREAD. Positions 182–206 are enriched in basic and acidic residues; that stretch reads TWRDGHEGVYASGEKKREGRSKADR.

Expressed in roots and vascular tissues near the shoot apex in young seedlings.

The protein localises to the nucleus. May play a role in the control of plant organ development. Does not show transactivation activity in yeast. The polypeptide is FHA domain-containing protein FHA1 (Arabidopsis thaliana (Mouse-ear cress)).